The chain runs to 466 residues: Siroheme synthase (466 aa).

Residues 1-203 form a precorrin-2 dehydrogenase /sirohydrochlorin ferrochelatase region; that stretch reads MNYLPIFIDI…GKIQEAKADL (203 aa). Residues 22–23 and 43–44 each bind NAD(+); these read SI and KS. Phosphoserine is present on S128. The segment at 216 to 466 is uroporphyrinogen-III C-methyltransferase; the sequence is GAVYLVGGGP…FDAKPISSKK (251 aa). Residue P225 coordinates S-adenosyl-L-methionine. Residue D248 is the Proton acceptor of the active site. K270 (proton donor) is an active-site residue. S-adenosyl-L-methionine-binding positions include 301-303, I306, 331-332, M383, and G412; these read GGD and TA.

It in the N-terminal section; belongs to the precorrin-2 dehydrogenase / sirohydrochlorin ferrochelatase family. This sequence in the C-terminal section; belongs to the precorrin methyltransferase family.

It catalyses the reaction uroporphyrinogen III + 2 S-adenosyl-L-methionine = precorrin-2 + 2 S-adenosyl-L-homocysteine + H(+). The catalysed reaction is precorrin-2 + NAD(+) = sirohydrochlorin + NADH + 2 H(+). It carries out the reaction siroheme + 2 H(+) = sirohydrochlorin + Fe(2+). It functions in the pathway cofactor biosynthesis; adenosylcobalamin biosynthesis; precorrin-2 from uroporphyrinogen III: step 1/1. Its pathway is cofactor biosynthesis; adenosylcobalamin biosynthesis; sirohydrochlorin from precorrin-2: step 1/1. The protein operates within porphyrin-containing compound metabolism; siroheme biosynthesis; precorrin-2 from uroporphyrinogen III: step 1/1. It participates in porphyrin-containing compound metabolism; siroheme biosynthesis; siroheme from sirohydrochlorin: step 1/1. It functions in the pathway porphyrin-containing compound metabolism; siroheme biosynthesis; sirohydrochlorin from precorrin-2: step 1/1. Functionally, multifunctional enzyme that catalyzes the SAM-dependent methylations of uroporphyrinogen III at position C-2 and C-7 to form precorrin-2 via precorrin-1. Then it catalyzes the NAD-dependent ring dehydrogenation of precorrin-2 to yield sirohydrochlorin. Finally, it catalyzes the ferrochelation of sirohydrochlorin to yield siroheme. In Vesicomyosocius okutanii subsp. Calyptogena okutanii (strain HA), this protein is Siroheme synthase.